The following is a 143-amino-acid chain: Large ribosomal subunit protein uL11 (143 aa).

Belongs to the universal ribosomal protein uL11 family. As to quaternary structure, part of the ribosomal stalk of the 50S ribosomal subunit. Interacts with L10 and the large rRNA to form the base of the stalk. L10 forms an elongated spine to which L12 dimers bind in a sequential fashion forming a multimeric L10(L12)X complex. Post-translationally, one or more lysine residues are methylated.

Forms part of the ribosomal stalk which helps the ribosome interact with GTP-bound translation factors. In Nitrosomonas eutropha (strain DSM 101675 / C91 / Nm57), this protein is Large ribosomal subunit protein uL11.